Reading from the N-terminus, the 147-residue chain is Hemoglobin subunit deltaH (147 aa).

The Globin domain maps to 3 to 147 (RLTDSEKAEV…MANALAHKYH (145 aa)). His-64 and His-93 together coordinate heme b.

Belongs to the globin family. Heterotetramer of two delta chains and two alpha chains. In terms of tissue distribution, red blood cells.

This Procavia capensis (Rock hyrax) protein is Hemoglobin subunit deltaH.